Consider the following 279-residue polypeptide: Ultraviolet N-glycosylase/AP lyase (279 aa).

Positions 123–142 (LEDLVALPGVGRKTAFVVLG) constitute a HhH domain. [4Fe-4S] cluster is bound by residues C203, C210, C213, and C219. The tract at residues 256 to 279 (TAGAAGPRPRAGGXAPGLPAQPFR) is disordered.

It belongs to the Nth/MutY family. [4Fe-4S] cluster is required as a cofactor.

Its function is as follows. DNA repair enzyme that has both DNA N-glycosylase activity and AP-lyase activity. Initiates repair at cis-syn pyrimidine dimers. Proceeds via an imino enzyme:DNA intermediate. In Micrococcus luteus (strain ATCC 4698 / DSM 20030 / JCM 1464 / CCM 169 / CCUG 5858 / IAM 1056 / NBRC 3333 / NCIMB 9278 / NCTC 2665 / VKM Ac-2230) (Micrococcus lysodeikticus), this protein is Ultraviolet N-glycosylase/AP lyase (pdg).